Consider the following 467-residue polypeptide: MSTLVNALGFFTSSTPAAAATKDVRSKEEILKRRKDTIGSKCQIFYSDDPFMVSRASMQYLYDEKSNKFLDCISNVQHVGHCHPKVVEAISKQLATSTCNVRFVSTQLTDCAEQILSTLPGLDTVLFCNSGSEANDLALRLARDYTKHKDAIVIEHAYHGHVTTTMELSPYKFDHGSTVSQPDWVHVAPCPDVFRGKHRLADNELTNEDKLYAAGKQYSDDVKSILNDVESRQCGVAAYFAEALQSCGGQVIPPKDYFKDVATHVRNHGGLMIIDEVQTGFGRIGRKYWAHQLYDDGFLPDIVTMGKPMGNGFPVSAVATRKEIADALGGEVGYFNTYGGNPVACAAVISVMKVVKDENLLEHSQQMGEKLEVALRDLQKKHECIGDIRGVGLFWGIDLVKDRNTREPDQKLAIATILALRKSYGILLNADGPHTNILKIKPPLCFNENNILETVTALDQVLTLMNR.

K307 is subject to N6-(pyridoxal phosphate)lysine.

Belongs to the class-III pyridoxal-phosphate-dependent aminotransferase family. Requires pyridoxal 5'-phosphate as cofactor.

In Caenorhabditis elegans, this protein is Ethanolamine-phosphate phospho-lyase homolog 1.